The chain runs to 293 residues: Microtubule-associated protein RP/EB family member 1B (293 aa).

A Calponin-homology (CH) domain is found at 13-115 (FVGRNEILSW…FLQWLKRFCD (103 aa)). Disordered regions lie at residues 124-188 (ENYN…SAEV) and 262-293 (LGLE…ETQT). The span at 129 to 141 (VERRSRGGREKSV) shows a compositional bias: basic and acidic residues. A compositionally biased stretch (polar residues) spans 151–166 (LQTNNMHHPPVATSNK). An EB1 C-terminal domain is found at 180-250 (GGSNSSAEVQ…LYATDANESV (71 aa)). The span at 266–285 (GYEEEGKEEEEEEEEEEEEA) shows a compositional bias: acidic residues.

This sequence belongs to the MAPRE family. As to quaternary structure, homodimer and heterodimer with EB1A. Highly expressed in guard cells of leaf stomata, pollen grains and pollen tubes. Expressed in young roots.

The protein resides in the cytoplasm. It localises to the cytoskeleton. The protein localises to the spindle pole. It is found in the phragmoplast. Its function is as follows. Binds to the plus end of microtubules and regulates the dynamics of the microtubule cytoskeleton. May be involved in anchoring microtubules to their nucleation sites and/or functioning as a reservoir for distribution to the growing end. In plants, microtubule minus ends are not necessarily severed from the nucleation site and transported to the plus end of a microtubule as part of the recycling process. May play a role in endomembrane organization during polarized growth of plant cells. In Arabidopsis thaliana (Mouse-ear cress), this protein is Microtubule-associated protein RP/EB family member 1B (EB1B).